Reading from the N-terminus, the 81-residue chain is Mu/omega-theraphotoxin-Hs1a (81 aa).

The signal sequence occupies residues 1-21 (MRASMFLALAGLVLLFVVCYA). A propeptide spanning residues 22–48 (SESEEKEFPRELLFKFFAVDDFKGEER) is cleaved from the precursor. 3 disulfides stabilise this stretch: Cys-50–Cys-65, Cys-57–Cys-70, and Cys-64–Cys-77.

This sequence belongs to the neurotoxin 10 (Hwtx-1) family. 23 (HwTx-I) subfamily. In terms of tissue distribution, expressed by the venom gland.

The protein resides in the secreted. Functionally, lethal toxin with multiple biological activities. Inhibits voltage-gated TTX-sensitive sodium channels in DRG neurons (IC(50)=55 nM) and also shows activity when directly tested on Nav1.7/SCN9A (IC(50)=25.1-630 nM). Inhibits N-type calcium channels (Cav2.2/CACNA1B (IC(50)=100 nM)). Also blocks neuromuscular transmission. In vivo, intrathecal injected toxin shows analgesic activity in the rat formalin-induced pain model, without induction of motor dysfunction in rats. The polypeptide is Mu/omega-theraphotoxin-Hs1a (Cyriopagopus schmidti (Chinese bird spider)).